The sequence spans 506 residues: Maturase K (506 aa).

Belongs to the intron maturase 2 family. MatK subfamily.

Its subcellular location is the plastid. It localises to the chloroplast. In terms of biological role, usually encoded in the trnK tRNA gene intron. Probably assists in splicing its own and other chloroplast group II introns. This Cytisus scoparius (Scotch broom) protein is Maturase K.